The following is a 115-amino-acid chain: MKYKLNVLLAEIALIGTGNHCHEEANCIAEWLHLKGEEEAVQLIQLSSLMNRGDYASALQQGNKSTYPDLEPWLALCEYRLGLGNALESRLNRLATSQDPRIQTFVNGMKEQLKT.

Belongs to the YscG family. In terms of assembly, component of the heterodimeric YscE-YscG chaperone. The YscE-YscG chaperone forms a stable ternary complex with YscF/SctF.

The protein localises to the cytoplasm. Chaperone of the type III secretion system (T3SS), also called injectisome, which is used to inject bacterial effector proteins into eukaryotic host cells. Along with YscE, prevents premature polymerization of the YscF/SctF needle protein within the cytoplasm. Required for Yop secretion. The chain is Type 3 secretion system chaperone YscG from Yersinia enterocolitica.